The sequence spans 403 residues: Synaptotagmin-7 (403 aa).

Topologically, residues 1–16 (MYRDPEAASPGAPSRD) are vesicular. Residues 17–37 (VLLVSAIITVSLSVTVVLCGL) form a helical membrane-spanning segment. At 38 to 403 (CHWCQRKLGK…PVAQWHQLKA (366 aa)) the chain is on the cytoplasmic side. Phosphoserine is present on S52. Residues 53–106 (LETVGTPDSGRGRSEKKAIKLPAGGKAVNTAPVPGQTPHDESDRRTEPRSSVSD) form a disordered region. A Phosphothreonine modification is found at T58. Residue S61 is modified to Phosphoserine. A compositionally biased stretch (basic and acidic residues) spans 90-100 (PHDESDRRTEP). Residues S119 and S122 each carry the phosphoserine modification. C2 domains lie at 135 to 255 (NLGR…TFWK) and 266 to 399 (SRGE…AQWH). Ca(2+) contacts are provided by D166, D172, D225, D227, S230, D233, D297, D303, D357, D359, S362, and D365.

Belongs to the synaptotagmin family. In terms of assembly, homodimer. Can also form heterodimers with SYT6, SYT9 and SYT10. Interacts with calmodulin (CALM1, CALM2 or CALM3). Interacts with CD63; required for localization to lysosomes. Interacts with APP. It depends on Ca(2+) as a cofactor. Post-translationally, palmitoylated at its vesicular N-terminus; palmitoylation is required for localization to lysosome and phagocytosis in macrophages. In terms of tissue distribution, expressed in a variety of adult and fetal tissues.

It is found in the cell membrane. It localises to the presynaptic cell membrane. The protein resides in the cytoplasmic vesicle. Its subcellular location is the secretory vesicle. The protein localises to the synaptic vesicle membrane. It is found in the lysosome membrane. It localises to the phagosome membrane. The protein resides in the peroxisome membrane. Its subcellular location is the secretory vesicle membrane. Ca(2+) sensor involved in Ca(2+)-dependent exocytosis of secretory and synaptic vesicles through Ca(2+) and phospholipid binding to the C2 domain. Ca(2+) induces binding of the C2-domains to phospholipid membranes and to assembled SNARE-complexes; both actions contribute to triggering exocytosis. SYT7 binds Ca(2+) with high affinity and slow kinetics compared to other synaptotagmins. Involved in Ca(2+)-triggered lysosomal exocytosis, a major component of the plasma membrane repair. Ca(2+)-regulated delivery of lysosomal membranes to the cell surface is also involved in the phagocytic uptake of particles by macrophages. Ca(2+)-triggered lysosomal exocytosis also plays a role in bone remodeling by regulating secretory pathways in osteoclasts and osteoblasts. In case of infection, involved in participates cell invasion by Trypanosoma cruzi via Ca(2+)-triggered lysosomal exocytosis. Involved in cholesterol transport from lysosome to peroxisome by promoting membrane contacts between lysosomes and peroxisomes: probably acts by promoting vesicle fusion by binding phosphatidylinositol-4,5-bisphosphate on peroxisomal membranes. Acts as a key mediator of synaptic facilitation, a process also named short-term synaptic potentiation: synaptic facilitation takes place at synapses with a low initial release probability and is caused by influx of Ca(2+) into the axon terminal after spike generation, increasing the release probability of neurotransmitters. Probably mediates synaptic facilitation by directly increasing the probability of release. May also contribute to synaptic facilitation by regulating synaptic vesicle replenishment, a process required to ensure that synaptic vesicles are ready for the arrival of the next action potential: SYT7 is required for synaptic vesicle replenishment by acting as a sensor for Ca(2+) and by forming a complex with calmodulin. Also acts as a regulator of Ca(2+)-dependent insulin and glucagon secretion in beta-cells. Triggers exocytosis by promoting fusion pore opening and fusion pore expansion in chromaffin cells. Also regulates the secretion of some non-synaptic secretory granules of specialized cells. This is Synaptotagmin-7 from Homo sapiens (Human).